The following is a 354-amino-acid chain: UDP-glucose 4-epimerase 1 (354 aa).

8-39 is an NAD(+) binding site; sequence TILVTGGAGYIGSHTVLQLLQLGFRVVVLDNL. Ser-133 provides a ligand contact to substrate. Tyr-157 acts as the Proton acceptor in catalysis.

Belongs to the NAD(P)-dependent epimerase/dehydratase family. NAD(+) is required as a cofactor.

It catalyses the reaction UDP-alpha-D-glucose = UDP-alpha-D-galactose. Its pathway is carbohydrate metabolism; galactose metabolism. Functionally, catalyzes the interconversion between UDP-glucose and UDP-galactose. This Oryza sativa subsp. japonica (Rice) protein is UDP-glucose 4-epimerase 1 (UGE-1).